The primary structure comprises 124 residues: Large ribosomal subunit protein bL12 (124 aa).

Residues 101–115 (ALSKDDAEKAKKELE) show a composition bias toward basic and acidic residues. The tract at residues 101 to 124 (ALSKDDAEKAKKELEEAGATVELK) is disordered.

Belongs to the bacterial ribosomal protein bL12 family. In terms of assembly, homodimer. Part of the ribosomal stalk of the 50S ribosomal subunit. Forms a multimeric L10(L12)X complex, where L10 forms an elongated spine to which 2 to 4 L12 dimers bind in a sequential fashion. Binds GTP-bound translation factors.

Its function is as follows. Forms part of the ribosomal stalk which helps the ribosome interact with GTP-bound translation factors. Is thus essential for accurate translation. The polypeptide is Large ribosomal subunit protein bL12 (Hahella chejuensis (strain KCTC 2396)).